A 143-amino-acid chain; its full sequence is AP-2 complex subunit sigma (143 aa).

Belongs to the adaptor complexes small subunit family. Adaptor protein complex 2 (AP-2) is a heterotetramer composed of two large adaptins (alpha-type subunit apl3 and beta-type subunit apl1), a medium chain (mu-type subunit apm4) and a small adaptin (sigma-type subunit aps2).

It is found in the cell membrane. Its subcellular location is the membrane. The protein resides in the coated pit. Component of the adaptor complexes which link clathrin to receptors in coated vesicles. Clathrin-associated protein complexes are believed to interact with the cytoplasmic tails of membrane proteins, leading to their selection and concentration. The sequence is that of AP-2 complex subunit sigma (aps2) from Schizosaccharomyces pombe (strain 972 / ATCC 24843) (Fission yeast).